The chain runs to 132 residues: Small ribosomal subunit protein uS8 (132 aa).

This sequence belongs to the universal ribosomal protein uS8 family. As to quaternary structure, part of the 30S ribosomal subunit. Contacts proteins S5 and S12.

One of the primary rRNA binding proteins, it binds directly to 16S rRNA central domain where it helps coordinate assembly of the platform of the 30S subunit. This Shouchella clausii (strain KSM-K16) (Alkalihalobacillus clausii) protein is Small ribosomal subunit protein uS8.